The chain runs to 452 residues: Exoglucanase 1 (452 aa).

The signal sequence occupies residues 1 to 18; that stretch reads MFSKFALTGSLLAGAVNA. A glycan (N-linked (GlcNAc...) asparagine) is linked at Asn-75. The active-site Nucleophile is the Glu-230. The Proton donor role is filled by Glu-235. N-linked (GlcNAc...) asparagine glycans are attached at residues Asn-335 and Asn-360.

This sequence belongs to the glycosyl hydrolase 7 (cellulase C) family.

It catalyses the reaction Hydrolysis of (1-&gt;4)-beta-D-glucosidic linkages in cellulose and cellotetraose, releasing cellobiose from the non-reducing ends of the chains.. Functionally, the biological conversion of cellulose to glucose generally requires three types of hydrolytic enzymes: (1) Endoglucanases which cut internal beta-1,4-glucosidic bonds; (2) Exocellobiohydrolases that cut the disaccharide cellobiose from the non-reducing end of the cellulose polymer chain; (3) Beta-1,4-glucosidases which hydrolyze the cellobiose and other short cello-oligosaccharides to glucose. In Cryphonectria parasitica (Chestnut blight fungus), this protein is Exoglucanase 1 (CBH-1).